A 483-amino-acid chain; its full sequence is ATP-dependent RNA helicase DDX25 (483 aa).

Residues 61–74 carry the Nuclear export signal motif; that stretch reads LAANSLLNKLIHQS. The short motif at 97–125 is the Q motif element; it reads KTFEELRLKEELLKGIYAMGFNRPSKIQE. The Nuclear localization signal motif lies at 100 to 114; the sequence is EELRLKEELLKGIYA. In terms of domain architecture, Helicase ATP-binding spans 130–300; it reads MMLAHPPQNL…ERIIPDPNVI (171 aa). 143 to 150 is an ATP binding site; that stretch reads SQSGTGKT. Residues 247 to 250 carry the DEAD box motif; it reads DEAD. The Helicase C-terminal domain maps to 311 to 478; that stretch reads NIRQYYVLCE…QLNAEDMDEI (168 aa).

It belongs to the DEAD box helicase family. Post-translationally, phosphorylated on threonine residues. The phosphorylated form is found in the cytoplasm but not in the nucleus. As to expression, highly expressed in the Leydig and germ cells of the testis and weakly expressed in the pituitary and hypothalamus.

It localises to the cytoplasm. It is found in the nucleus. The enzyme catalyses ATP + H2O = ADP + phosphate + H(+). In terms of biological role, ATP-dependent RNA helicase. Required for mRNA export and translation regulation during spermatid development. This chain is ATP-dependent RNA helicase DDX25 (DDX25), found in Homo sapiens (Human).